A 184-amino-acid polypeptide reads, in one-letter code: Probable RNA 2'-phosphotransferase (184 aa).

It belongs to the KptA/TPT1 family.

Functionally, removes the 2'-phosphate from RNA via an intermediate in which the phosphate is ADP-ribosylated by NAD followed by a presumed transesterification to release the RNA and generate ADP-ribose 1''-2''-cyclic phosphate (APPR&gt;P). May function as an ADP-ribosylase. In Escherichia coli O139:H28 (strain E24377A / ETEC), this protein is Probable RNA 2'-phosphotransferase.